The primary structure comprises 70 residues: uncharacterized protein (70 aa).

This is an uncharacterized protein from Dictyostelium discoideum (Social amoeba).